The sequence spans 176 residues: Ribosome maturation factor RimM (176 aa).

Residues 96 to 176 (PEDEFYWRDL…QILVDWDPDF (81 aa)) enclose the PRC barrel domain.

It belongs to the RimM family. In terms of assembly, binds ribosomal protein uS19.

The protein localises to the cytoplasm. Its function is as follows. An accessory protein needed during the final step in the assembly of 30S ribosomal subunit, possibly for assembly of the head region. Essential for efficient processing of 16S rRNA. May be needed both before and after RbfA during the maturation of 16S rRNA. It has affinity for free ribosomal 30S subunits but not for 70S ribosomes. The sequence is that of Ribosome maturation factor RimM from Shewanella piezotolerans (strain WP3 / JCM 13877).